A 416-amino-acid polypeptide reads, in one-letter code: Glutamyl-tRNA reductase 1 (416 aa).

Substrate contacts are provided by residues 57-60 (TCNR), serine 113, 118-120 (DFE), and glutamine 124. Catalysis depends on cysteine 58, which acts as the Nucleophile. 193-198 (GTGKIG) is a binding site for NADP(+).

This sequence belongs to the glutamyl-tRNA reductase family. As to quaternary structure, homodimer.

The enzyme catalyses (S)-4-amino-5-oxopentanoate + tRNA(Glu) + NADP(+) = L-glutamyl-tRNA(Glu) + NADPH + H(+). It functions in the pathway porphyrin-containing compound metabolism; protoporphyrin-IX biosynthesis; 5-aminolevulinate from L-glutamyl-tRNA(Glu): step 1/2. Catalyzes the NADPH-dependent reduction of glutamyl-tRNA(Glu) to glutamate 1-semialdehyde (GSA). This Flavobacterium johnsoniae (strain ATCC 17061 / DSM 2064 / JCM 8514 / BCRC 14874 / CCUG 350202 / NBRC 14942 / NCIMB 11054 / UW101) (Cytophaga johnsonae) protein is Glutamyl-tRNA reductase 1.